We begin with the raw amino-acid sequence, 626 residues long: Carnitine O-acetyltransferase (626 aa).

N6-succinyllysine is present on Lys93. Lys261 is subject to N6-acetyllysine; alternate. N6-succinyllysine; alternate is present on Lys261. Lys268 is subject to N6-acetyllysine. Catalysis depends on His343, which acts as the Proton acceptor. CoA contacts are provided by residues Lys419 and 423–430 (KSEKLSPD). Positions 452 and 454 each coordinate (R)-carnitine. A CoA-binding site is contributed by Ser456. Position 465 (Thr465) interacts with (R)-carnitine. CoA is bound by residues Arg504 and Gln555. Positions 624–626 (AKL) match the Microbody targeting signal motif.

It belongs to the carnitine/choline acetyltransferase family. As to quaternary structure, monomer.

It is found in the endoplasmic reticulum. The protein localises to the peroxisome. It localises to the mitochondrion inner membrane. It catalyses the reaction (R)-carnitine + acetyl-CoA = O-acetyl-(R)-carnitine + CoA. The enzyme catalyses propanoyl-CoA + (R)-carnitine = O-propanoyl-(R)-carnitine + CoA. The catalysed reaction is butanoyl-CoA + (R)-carnitine = O-butanoyl-(R)-carnitine + CoA. It carries out the reaction hexanoyl-CoA + (R)-carnitine = O-hexanoyl-(R)-carnitine + CoA. It catalyses the reaction octanoyl-CoA + (R)-carnitine = O-octanoyl-(R)-carnitine + CoA. The enzyme catalyses decanoyl-CoA + (R)-carnitine = O-decanoyl-(R)-carnitine + CoA. The catalysed reaction is 3-methylbutanoyl-CoA + (R)-carnitine = O-3-methylbutanoyl-(R)-carnitine + CoA. It carries out the reaction 2-methylpropanoyl-CoA + (R)-carnitine = O-isobutanoyl-(R)-carnitine + CoA. It catalyses the reaction 2-methylbutanoyl-CoA + (R)-carnitine = O-2-methylbutanoyl-(R)-carnitine + CoA. The enzyme catalyses acetoacetyl-CoA + (R)-carnitine = O-3-oxobutanoyl-(R)-carnitine + CoA. The catalysed reaction is 3-hydroxybutanoyl-CoA + (R)-carnitine = O-3-hydroxybutanoyl-(R)-carnitine + CoA. It carries out the reaction 4,8-dimethylnonanoyl-CoA + (R)-carnitine = O-4,8-dimethylnonanoyl-(R)-carnitine + CoA. It catalyses the reaction 2,6-dimethylheptanoyl-CoA + (R)-carnitine = O-2,6-dimethylheptanoyl-(R)-carnitine + CoA. Functionally, catalyzes the reversible transfer of acyl groups from carnitine to coenzyme A (CoA) and regulates the acyl-CoA/CoA ratio. Also plays a crucial role in the transport of fatty acids for beta-oxidation. Responsible for the synthesis of short- and branched-chain acylcarnitines. Active towards some branched-chain amino acid oxidation pathway (BCAAO) intermediates. Trans-2-enoyl-CoAs and 2-methylacyl-CoAs are poor substrates. This Mus musculus (Mouse) protein is Carnitine O-acetyltransferase.